Here is a 288-residue protein sequence, read N- to C-terminus: MVKVGIIGGSGLEDPNILLDPVTVAVDTPYGKPSDDVVEGTINGVECVLLARHGRKHDIMPGNVNFRANLWALYSRGVDVIIASTACGSLQENVEPGHLLFPDSVFDRTTGRQSTFFDGSYDQAPGVCHIQAHPTYNEKLRQVLISTAERCQLVHHRTGFGVCIEGPRFSTKAESMVFKSWGASLVNMTMMPECILAKELGIPYATTALVTDYDCWKEEDHVTASSVMKVFAANVEKAKTLFVEAVGEIGKIDWSAEILKLKTEARESVMISPDVVIPFLTTDNQKKF.

Residues S10, 52-53 (RH), and 85-86 (TA) contribute to the phosphate site. M188 is a binding site for substrate. Residue T189 coordinates phosphate. Residue 212–214 (DYD) participates in substrate binding.

Belongs to the PNP/MTAP phosphorylase family. MTAP subfamily. In terms of assembly, homotrimer.

It localises to the cytoplasm. The protein resides in the nucleus. The enzyme catalyses S-methyl-5'-thioadenosine + phosphate = 5-(methylsulfanyl)-alpha-D-ribose 1-phosphate + adenine. It participates in amino-acid biosynthesis; L-methionine biosynthesis via salvage pathway; S-methyl-5-thio-alpha-D-ribose 1-phosphate from S-methyl-5'-thioadenosine (phosphorylase route): step 1/1. In terms of biological role, catalyzes the reversible phosphorylation of S-methyl-5'-thioadenosine (MTA) to adenine and 5-methylthioribose-1-phosphate. Involved in the breakdown of MTA, a major by-product of polyamine biosynthesis. Responsible for the first step in the methionine salvage pathway after MTA has been generated from S-adenosylmethionine. Has broad substrate specificity with 6-aminopurine nucleosides as preferred substrates. This Caenorhabditis elegans protein is S-methyl-5'-thioadenosine phosphorylase.